A 79-amino-acid polypeptide reads, in one-letter code: Morintide mO2 (79 aa).

The N-terminal stretch at 1–20 (MAKLSFLSLFLLCLVATATA) is a signal peptide. One can recognise a Chitin-binding type-1 domain in the interval 21–63 (QNCGRQAGNRACANGLCCSQYGFCGSTSEYCSRANGCQSNCRG). Cystine bridges form between C23-C38, C32-C44, C37-C51, and C57-C61. The propeptide occupies 64–79 (GGGAGGAGGGAGGGSP).

As to expression, leaves (at protein level).

Functionally, chitin-binding protein which functions in defense against chitin-containing fungal pathogens. This chain is Morintide mO2, found in Moringa oleifera (Horseradish tree).